We begin with the raw amino-acid sequence, 430 residues long: Tol-Pal system protein TolB (430 aa).

The first 21 residues, 1 to 21 (MKQAFRVALGFLILWASVLHA), serve as a signal peptide directing secretion.

Belongs to the TolB family. As to quaternary structure, the Tol-Pal system is composed of five core proteins: the inner membrane proteins TolA, TolQ and TolR, the periplasmic protein TolB and the outer membrane protein Pal. They form a network linking the inner and outer membranes and the peptidoglycan layer.

The protein resides in the periplasm. Its function is as follows. Part of the Tol-Pal system, which plays a role in outer membrane invagination during cell division and is important for maintaining outer membrane integrity. TolB occupies a key intermediary position in the Tol-Pal system because it communicates directly with both membrane-embedded components, Pal in the outer membrane and TolA in the inner membrane. This Serratia proteamaculans (strain 568) protein is Tol-Pal system protein TolB.